The chain runs to 172 residues: MSSARDSQAQHGLKRAASPDGSGSWQAADLGNEERKQKFLRLMGAGKKEHTGRLVIGDHRSTSHFRTGEEDKKMNEELESQYQQSMDSTMSGRNRRHCGLGFSEFQEVEEEAAGHSSDHESSEDSESGSDSEQDESAEELQAAEKHDEAAVPENKKEAKSNYKMMFVKASGS.

A compositionally biased stretch (polar residues) spans 1–10 (MSSARDSQAQ). The interval 1 to 172 (MSSARDSQAQ…KMMFVKASGS (172 aa)) is disordered. Residues 46–76 (GKKEHTGRLVIGDHRSTSHFRTGEEDKKMNE) are compositionally biased toward basic and acidic residues. Residues 80–92 (SQYQQSMDSTMSG) show a composition bias toward polar residues. The segment covering 112–122 (AAGHSSDHESS) has biased composition (basic and acidic residues). Acidic residues predominate over residues 123–138 (EDSESGSDSEQDESAE). Basic and acidic residues predominate over residues 142–160 (AAEKHDEAAVPENKKEAKS).

It belongs to the SMAP family. In terms of tissue distribution, expressed in otocyst.

This is Small acidic protein (SMAP) from Coturnix japonica (Japanese quail).